A 365-amino-acid polypeptide reads, in one-letter code: 3-isopropylmalate dehydrogenase (365 aa).

80-91 (GPKWGTGAVRPE) is an NAD(+) binding site. Residues Arg-98, Arg-108, Arg-137, and Asp-226 each coordinate substrate. Residues Asp-226, Asp-251, and Asp-255 each coordinate Mg(2+). 290–301 (GSAPDLPKGKVN) provides a ligand contact to NAD(+).

Belongs to the isocitrate and isopropylmalate dehydrogenases family. Homodimer. Mg(2+) serves as cofactor. The cofactor is Mn(2+).

It localises to the cytoplasm. The enzyme catalyses (2R,3S)-3-isopropylmalate + NAD(+) = 4-methyl-2-oxopentanoate + CO2 + NADH. It participates in amino-acid biosynthesis; L-leucine biosynthesis; L-leucine from 3-methyl-2-oxobutanoate: step 3/4. In terms of biological role, catalyzes the oxidation of 3-carboxy-2-hydroxy-4-methylpentanoate (3-isopropylmalate) to 3-carboxy-4-methyl-2-oxopentanoate. The product decarboxylates to 4-methyl-2 oxopentanoate. The chain is 3-isopropylmalate dehydrogenase (LEU2) from Candida glabrata (strain ATCC 2001 / BCRC 20586 / JCM 3761 / NBRC 0622 / NRRL Y-65 / CBS 138) (Yeast).